The sequence spans 294 residues: N-acetylmuramic acid 6-phosphate etherase (294 aa).

The 164-residue stretch at Val54–Lys217 folds into the SIS domain. Catalysis depends on Glu82, which acts as the Proton donor. Glu113 is a catalytic residue.

This sequence belongs to the GCKR-like family. MurNAc-6-P etherase subfamily. As to quaternary structure, homodimer.

The catalysed reaction is N-acetyl-D-muramate 6-phosphate + H2O = N-acetyl-D-glucosamine 6-phosphate + (R)-lactate. The protein operates within amino-sugar metabolism; N-acetylmuramate degradation. Its function is as follows. Specifically catalyzes the cleavage of the D-lactyl ether substituent of MurNAc 6-phosphate, producing GlcNAc 6-phosphate and D-lactate. This Bacillus cereus (strain AH820) protein is N-acetylmuramic acid 6-phosphate etherase.